Reading from the N-terminus, the 1604-residue chain is Collagen alpha-1(XVI) chain (1604 aa).

The signal sequence occupies residues 1-21; it reads MWVSWAPGLWLLGLWATFGHG. A glycan (N-linked (GlcNAc...) asparagine) is linked at N47. The Laminin G-like domain occupies 50–231; that stretch reads GFNLIHRLSL…LQQVHIYCDP (182 aa). Residues 232-374 are nonhelical region 10 (NC10); the sequence is ELVLEEGCCE…SPDAPLQCAE (143 aa). Residues 301–311 show a composition bias toward basic and acidic residues; sequence AERGAKVHQET. Residues 301–509 are disordered; sequence AERGAKVHQE…KGEKGDPCEV (209 aa). Residue N327 is glycosylated (N-linked (GlcNAc...) asparagine). Residues 375–423 form the Collagen-like 1 domain; it reads GPKGEKGESGALGPSGLPGSTGEKGQKGEKGDGGIKGVPGKPGRDGRPG. A triple-helical region 9 (COL9) with 3 imperfections region spans residues 375-506; the sequence is GPKGEKGESG…PGVKGEKGDP (132 aa). The span at 383-397 shows a compositional bias: low complexity; the sequence is SGALGPSGLPGSTGE. A compositionally biased stretch (basic and acidic residues) spans 398–407; that stretch reads KGQKGEKGDG. Over residues 449 to 460 the composition is skewed to pro residues; sequence PGPPGLPGPPGI. The span at 486 to 495 shows a compositional bias: gly residues; that stretch reads GKEGPGGKPG. Residues 507-521 form a nonhelical region 9 (NC9) region; it reads CEVCPTLPEGFQNFV. Positions 522–555 are triple-helical region 8 (COL8) with 1 imperfection; it reads GLPGKPGPKGEPGDPVPARGDPGIQGIKGEKGEP. The short motif at 540 to 542 is the Cell attachment site element; the sequence is RGD. The tract at residues 556-572 is nonhelical region 8 (NC8); the sequence is CLSCSSVVGAQHLVSST. The triple-helical region 7 (COL7) with 1 imperfection stretch occupies residues 573 to 631; sequence GASGDVGSPGFGLPGLPGRAGVPGLKGEKGNFGEAGPAGSPGPPGPVGPAGIKGAKGEP. 2 consecutive Collagen-like domains span residues 573-633 and 667-721; these read GASG…EPCE and GLPG…GEKG. The segment at 604-917 is disordered; sequence FGEAGPAGSP…PPGIPGPPGP (314 aa). Residues 632 to 652 form a nonhelical region 7 (NC7) region; sequence CEPCPALSNLQDGDVRVVALP. Residues 653 to 723 form a triple-helical region 6 (COL6) with 1 imperfection region; that stretch reads GPSGEKGEPG…AGPKGEKGDG (71 aa). The segment covering 674-684 has biased composition (basic and acidic residues); the sequence is KAGERGLKGQK. Residues 686–702 show a composition bias toward low complexity; the sequence is DAGNPGDPGTPGTTGRP. A nonhelical region 6 (NC6) region spans residues 724–738; sequence CTACPSLQGTVTDMA. The triple-helical region 5 (COL5) with 3 imperfections stretch occupies residues 739 to 876; it reads GRPGQPGPKG…RGEKGEPGEC (138 aa). Low complexity-rich tracts occupy residues 766-781, 792-808, and 826-846; these read LPGV…VQGE, PQGE…QGLP, and PGVK…SGPP. A Collagen-like 4 domain is found at 788–840; it reads GVQGPQGEPGAPGLPGIQGLPGPRGPPGPTGEKGAQGSPGVKGATGPVGPPGA. A compositionally biased stretch (basic and acidic residues) spans 864-873; it reads KGPRGEKGEP. Residues 877–887 are nonhelical region 5 (NC5); it reads SCPSQGDLIFS. In terms of domain architecture, Collagen-like 5 spans 888 to 938; it reads GMPGAPGLWMGSSWQPGPQGPPGIPGPPGPPGVPGLQGVPGNNGLPGQPGL. Residues 888-939 are triple-helical region 4 (COL4) with 2 imperfections; it reads GMPGAPGLWMGSSWQPGPQGPPGIPGPPGPPGVPGLQGVPGNNGLPGQPGLT. Residues 905–917 are compositionally biased toward pro residues; that stretch reads PQGPPGIPGPPGP. A nonhelical region 4 (NC4) region spans residues 940-973; it reads AELGSLPIEQHLLKSICGDCVQGQRAHPGYLVEK. Residues 974–988 form a triple-helical region 3 (COL3) region; that stretch reads GEKGDQGIPGVPGLD. The segment at 989-1011 is nonhelical region 3 (NC3); sequence NCAQCFLSLERPRAEEARGDNSE. Disordered regions lie at residues 1001 to 1429 and 1468 to 1517; these read RAEE…VPGS and MAAA…PGTK. The short motif at 1006-1008 is the Cell attachment site element; it reads RGD. The interval 1012 to 1433 is triple-helical region 2 (COL2) with 2 imperfections; that stretch reads GDPGCVGSPG…PGVPGSMGDM (422 aa). The region spanning 1018-1075 is the Collagen-like 6 domain; that stretch reads GSPGLPGPPGLPGQRGEEGPPGMRGSPGPPGPIGPPGFPGAVGSPGLPGLQGERGLTG. Composition is skewed to pro residues over residues 1044–1055, 1160–1169, and 1199–1208; these read PGPPGPIGPPGF, FPGPPGPPGF, and SPGPPGPPGI. The span at 1217–1226 shows a compositional bias: basic and acidic residues; the sequence is LDGKDGKPGL. The short motif at 1227–1229 is the Cell attachment site element; it reads RGD. Low complexity predominate over residues 1271–1284; the sequence is RPGAEGEPGAMGPQ. 2 stretches are compositionally biased toward pro residues: residues 1286-1302 and 1330-1342; these read RPGP…PGQP and QPGP…PPGE. Residues 1369-1378 show a composition bias toward low complexity; that stretch reads DPGAAGQKGQ. Positions 1386–1395 are enriched in gly residues; that stretch reads GMPGGPGKSG. Residues 1420–1429 are compositionally biased toward low complexity; it reads SPGLPGVPGS. The segment at 1434-1472 is nonhelical region 2 (NC2); it reads VNYDEIKRFIRQEIIKMFDERMAYYTSRMQFPMEMAAAP. Collagen-like domains are found at residues 1472–1524 and 1528–1576; these read PGRP…GDIG and AGEN…GKAG. Residues 1473-1578 are triple-helical region 1 (COL1) with 2 imperfections; sequence GRPGPPGKDG…MGQPGKAGHC (106 aa). A nonhelical region 1 (NC1) region spans residues 1579 to 1604; sequence NPSDCFGAMPMEQQYPPMKTMKGPFG.

The protein belongs to the fibril-associated collagens with interrupted helices (FACIT) family. Homotrimer. Interacts with FBN1, fibronectin and integrins ITGA1/ITGB1 and ITGA2/ITGB1. Integrin ITGA1/ITGB1 binds to a unique site within COL16A1 located close to its C-terminal end between collagenous domains COL1-COL3. Post-translationally, prolines at the third position of the tripeptide repeating unit (G-X-Y) are hydroxylated in some or all of the chains. Glycosylated. In terms of tissue distribution, in papillary dermis, is a component of specialized fibrillin-1-containing microfibrils, whereas in territorial cartilage matrix, it is localized to a discrete population of thin, weakly banded collagen fibrils in association with other collagens (at protein level). In the placenta, where it is found in the amnion, a membranous tissue lining the amniotic cavity. Within the amnion, it is found in an acellular, relatively dense layer of a complex network of reticular fibers. Also located to a fibroblast layer beneath this dense layer. Exists in tissues in association with other types of collagen.

It is found in the secreted. The protein resides in the extracellular space. The protein localises to the extracellular matrix. In terms of biological role, involved in mediating cell attachment and inducing integrin-mediated cellular reactions, such as cell spreading and alterations in cell morphology. The polypeptide is Collagen alpha-1(XVI) chain (COL16A1) (Homo sapiens (Human)).